The sequence spans 316 residues: Aspartate carbamoyltransferase catalytic subunit (316 aa).

Arginine 60 and threonine 61 together coordinate carbamoyl phosphate. Lysine 88 serves as a coordination point for L-aspartate. Arginine 110, histidine 138, and glutamine 141 together coordinate carbamoyl phosphate. Residues arginine 171 and arginine 225 each coordinate L-aspartate. Carbamoyl phosphate contacts are provided by glycine 266 and proline 267.

Belongs to the aspartate/ornithine carbamoyltransferase superfamily. ATCase family. Heterododecamer (2C3:3R2) of six catalytic PyrB chains organized as two trimers (C3), and six regulatory PyrI chains organized as three dimers (R2).

The catalysed reaction is carbamoyl phosphate + L-aspartate = N-carbamoyl-L-aspartate + phosphate + H(+). Its pathway is pyrimidine metabolism; UMP biosynthesis via de novo pathway; (S)-dihydroorotate from bicarbonate: step 2/3. Catalyzes the condensation of carbamoyl phosphate and aspartate to form carbamoyl aspartate and inorganic phosphate, the committed step in the de novo pyrimidine nucleotide biosynthesis pathway. The protein is Aspartate carbamoyltransferase catalytic subunit of Rhizorhabdus wittichii (strain DSM 6014 / CCUG 31198 / JCM 15750 / NBRC 105917 / EY 4224 / RW1) (Sphingomonas wittichii).